A 426-amino-acid polypeptide reads, in one-letter code: Glutamate-1-semialdehyde 2,1-aminomutase (426 aa).

Lys-265 carries the post-translational modification N6-(pyridoxal phosphate)lysine.

This sequence belongs to the class-III pyridoxal-phosphate-dependent aminotransferase family. HemL subfamily. In terms of assembly, homodimer. It depends on pyridoxal 5'-phosphate as a cofactor.

It localises to the cytoplasm. It catalyses the reaction (S)-4-amino-5-oxopentanoate = 5-aminolevulinate. It functions in the pathway porphyrin-containing compound metabolism; protoporphyrin-IX biosynthesis; 5-aminolevulinate from L-glutamyl-tRNA(Glu): step 2/2. This Escherichia coli O9:H4 (strain HS) protein is Glutamate-1-semialdehyde 2,1-aminomutase.